We begin with the raw amino-acid sequence, 485 residues long: Probable serine/threonine-protein kinase nek1 (485 aa).

The Protein kinase domain maps to 12–283; the sequence is YLIKSQIGSG…TQQILEQVFI (272 aa). ATP-binding positions include 18-26 and Lys41; that span reads IGSGSYGNT. Asp136 (proton acceptor) is an active-site residue. A compositionally biased stretch (polar residues) spans 354-365; that stretch reads KNQQQQSPQKLE. The segment at 354–419 is disordered; the sequence is KNQQQQSPQK…NNDKNNNINN (66 aa). The span at 366–419 shows a compositional bias: low complexity; that stretch reads NNNNNNNDNNNNNNNNNNNNNNNNNNNNNNNNNNNNNNNNNNNNNNDKNNNINN.

Belongs to the protein kinase superfamily. NEK Ser/Thr protein kinase family. NIMA subfamily.

The catalysed reaction is L-seryl-[protein] + ATP = O-phospho-L-seryl-[protein] + ADP + H(+). It carries out the reaction L-threonyl-[protein] + ATP = O-phospho-L-threonyl-[protein] + ADP + H(+). This is Probable serine/threonine-protein kinase nek1 (nek1) from Dictyostelium discoideum (Social amoeba).